Here is a 182-residue protein sequence, read N- to C-terminus: Large ribosomal subunit protein uL5m (182 aa).

It belongs to the universal ribosomal protein uL5 family.

The protein resides in the mitochondrion. The sequence is that of Large ribosomal subunit protein uL5m (RPL5) from Reclinomonas americana.